The primary structure comprises 89 residues: Small ribosomal subunit protein uS15 (89 aa).

The protein belongs to the universal ribosomal protein uS15 family. As to quaternary structure, part of the 30S ribosomal subunit. Forms a bridge to the 50S subunit in the 70S ribosome, contacting the 23S rRNA.

In terms of biological role, one of the primary rRNA binding proteins, it binds directly to 16S rRNA where it helps nucleate assembly of the platform of the 30S subunit by binding and bridging several RNA helices of the 16S rRNA. Its function is as follows. Forms an intersubunit bridge (bridge B4) with the 23S rRNA of the 50S subunit in the ribosome. The polypeptide is Small ribosomal subunit protein uS15 (Staphylococcus saprophyticus subsp. saprophyticus (strain ATCC 15305 / DSM 20229 / NCIMB 8711 / NCTC 7292 / S-41)).